A 214-amino-acid chain; its full sequence is Dynein axonemal assembly factor 6 (214 aa).

Disordered regions lie at residues 1-22 (MESE…QNVD) and 34-68 (ALSK…NIGP).

The protein belongs to the PIH1 family. In terms of assembly, interacts with HSPA1A/B and HSP90AA1. Interacts with DNAAF2 and DNAAF4. Interacts wuth DNAI2. In terms of tissue distribution, expressed in testis, small intestine, prostate, adrenal gland, spleen, lung, bladder, breast and ovary. Expressed in ciliated epithelial cells.

It is found in the cytoplasm. It localises to the golgi apparatus. The protein localises to the trans-Golgi network. Functionally, plays a role in cytoplasmic pre-assembly of axonemal dynein. This is Dynein axonemal assembly factor 6 from Homo sapiens (Human).